A 263-amino-acid polypeptide reads, in one-letter code: uncharacterized protein (263 aa).

Transmembrane regions (helical) follow at residues 53 to 73 (FWII…LVKI), 103 to 123 (GFLF…LPGL), 130 to 150 (IILP…VFSY), 153 to 173 (LIPA…EPLW), 181 to 201 (FILV…IQIL), 213 to 233 (MLAA…ILTP), and 241 to 261 (LLLS…LFLI).

This sequence belongs to the TatC family.

Its subcellular location is the plastid. The protein localises to the chloroplast membrane. This is an uncharacterized protein from Trieres chinensis (Marine centric diatom).